Reading from the N-terminus, the 69-residue chain is Large ribosomal subunit protein uL29 (69 aa).

The protein belongs to the universal ribosomal protein uL29 family.

This is Large ribosomal subunit protein uL29 (rpmC) from Lactococcus lactis subsp. lactis (strain IL1403) (Streptococcus lactis).